The chain runs to 90 residues: Albumin (90 aa).

A Phosphoserine modification is found at Ser-5. Ca(2+) contacts are provided by Glu-6 and Asp-13. The region spanning Leu-25–Ala-90 is the Albumin domain. The residue at position 61 (Ser-61) is a Phosphoserine. Phosphothreonine occurs at positions 62 and 64. An N6-methyllysine modification is found at Lys-80.

This sequence belongs to the ALB/AFP/VDB family. As to quaternary structure, interacts with FCGRT; this interaction regulates ALB homeostasis. Interacts with TASOR. In plasma, occurs in a covalently-linked complex with chromophore-bound alpha-1-microglobulin; this interaction does not prevent fatty acid binding to ALB. As to expression, plasma.

The protein localises to the secreted. Binds water, Ca(2+), Na(+), K(+), fatty acids, hormones, bilirubin and drugs. Its main function is the regulation of the colloidal osmotic pressure of blood. Major zinc transporter in plasma, typically binds about 80% of all plasma zinc. Major calcium and magnesium transporter in plasma, binds approximately 45% of circulating calcium and magnesium in plasma. Potentially has more than two calcium-binding sites and might additionally bind calcium in a non-specific manner. The shared binding site between zinc and calcium suggests a crosstalk between zinc and calcium transport in the blood. The rank order of affinity is zinc &gt; calcium &gt; magnesium. Binds to the bacterial siderophore enterobactin and inhibits enterobactin-mediated iron uptake of E.coli from ferric transferrin, and may thereby limit the utilization of iron and growth of enteric bacteria such as E.coli. Does not prevent iron uptake by the bacterial siderophore aerobactin. This Capra hircus (Goat) protein is Albumin.